The chain runs to 524 residues: Protein hunchback (524 aa).

Disordered stretches follow at residues 42 to 86 (IVKR…PQTQ) and 101 to 187 (YNHN…DEQS). The segment covering 59-75 (SGSDFHSSSPSSDTSQD) has biased composition (low complexity). Residues 76–86 (LQHSYQSPQTQ) show a composition bias toward polar residues. Basic and acidic residues-rich tracts occupy residues 118–127 (KSEKEEKDME), 138–154 (RKPDDNQDHLRRLEMSL), and 164–178 (TSEHSVDELSGKSDN). 4 C2H2-type zinc fingers span residues 202–224 (FKCKQCDFVAITKLEQWNHSKVH), 231–253 (LTCPKCPFITEYKHHLEYHLRNH), 259–281 (FQCNKCDYTCVNKSMLNSHMKSH), and 298–311 (YCHSLKIHLRRYGH). The disordered stretch occupies residues 402 to 442 (DLSKPGCSYTGEQKSRRKGPAFKVDPTQVESEEEDEETSTT). C2H2-type zinc fingers lie at residues 471–493 (NSCQYCNIAFGDAVLYTIHMGYH) and 499–523 (FTCNMCGVECSDKVSFFLHIARVSH).

Belongs to the hunchback C2H2-type zinc-finger protein family.

The protein localises to the nucleus. Gap class segmentation protein that controls development of head structures. This is Protein hunchback (hb) from Tribolium castaneum (Red flour beetle).